Here is a 395-residue protein sequence, read N- to C-terminus: Flap endonuclease 1 (395 aa).

The segment at 1 to 104 (MGIKHLYQII…GELAKRIARK (104 aa)) is N-domain. D34 is a binding site for Mg(2+). The DNA site is built by R47 and R70. D86 provides a ligand contact to Mg(2+). Positions 103-123 (RKQEAAEQHEEAKETGTTEDV) are disordered. The interval 122-253 (DVEKFSRRTV…NTALKLIRDH (132 aa)) is I-domain. Mg(2+) contacts are provided by E158, E160, D179, and D181. E158 lines the DNA pocket. Residues G231 and D233 each contribute to the DNA site. D233 lines the Mg(2+) pocket. An interaction with PCNA region spans residues 341 to 349 (QQSRLEGFF). Over residues 356 to 389 (DEEKASLKRKHEEKLEAAKKKKKEDAKAKREAKS) the composition is skewed to basic and acidic residues. Residues 356 to 395 (DEEKASLKRKHEEKLEAAKKKKKEDAKAKREAKSRPKGTA) form a disordered region.

Belongs to the XPG/RAD2 endonuclease family. FEN1 subfamily. Interacts with PCNA. Three molecules of FEN1 bind to one PCNA trimer with each molecule binding to one PCNA monomer. PCNA stimulates the nuclease activity without altering cleavage specificity. Mg(2+) is required as a cofactor. In terms of processing, phosphorylated. Phosphorylation upon DNA damage induces relocalization to the nuclear plasma.

It is found in the nucleus. The protein localises to the nucleolus. Its subcellular location is the nucleoplasm. The protein resides in the mitochondrion. Structure-specific nuclease with 5'-flap endonuclease and 5'-3' exonuclease activities involved in DNA replication and repair. During DNA replication, cleaves the 5'-overhanging flap structure that is generated by displacement synthesis when DNA polymerase encounters the 5'-end of a downstream Okazaki fragment. It enters the flap from the 5'-end and then tracks to cleave the flap base, leaving a nick for ligation. Also involved in the long patch base excision repair (LP-BER) pathway, by cleaving within the apurinic/apyrimidinic (AP) site-terminated flap. Acts as a genome stabilization factor that prevents flaps from equilibrating into structures that lead to duplications and deletions. Also possesses 5'-3' exonuclease activity on nicked or gapped double-stranded DNA, and exhibits RNase H activity. Also involved in replication and repair of rDNA and in repairing mitochondrial DNA. In Uncinocarpus reesii (strain UAMH 1704), this protein is Flap endonuclease 1.